We begin with the raw amino-acid sequence, 223 residues long: Phosphoribosylformylglycinamidine synthase subunit PurQ (223 aa).

Residues 4–223 enclose the Glutamine amidotransferase type-1 domain; that stretch reads KIGVITFPGT…FLSAIGTIAA (220 aa). The active-site Nucleophile is Cys87. Catalysis depends on residues His195 and Glu197.

As to quaternary structure, part of the FGAM synthase complex composed of 1 PurL, 1 PurQ and 2 PurS subunits.

The protein resides in the cytoplasm. It carries out the reaction N(2)-formyl-N(1)-(5-phospho-beta-D-ribosyl)glycinamide + L-glutamine + ATP + H2O = 2-formamido-N(1)-(5-O-phospho-beta-D-ribosyl)acetamidine + L-glutamate + ADP + phosphate + H(+). The enzyme catalyses L-glutamine + H2O = L-glutamate + NH4(+). Its pathway is purine metabolism; IMP biosynthesis via de novo pathway; 5-amino-1-(5-phospho-D-ribosyl)imidazole from N(2)-formyl-N(1)-(5-phospho-D-ribosyl)glycinamide: step 1/2. Its function is as follows. Part of the phosphoribosylformylglycinamidine synthase complex involved in the purines biosynthetic pathway. Catalyzes the ATP-dependent conversion of formylglycinamide ribonucleotide (FGAR) and glutamine to yield formylglycinamidine ribonucleotide (FGAM) and glutamate. The FGAM synthase complex is composed of three subunits. PurQ produces an ammonia molecule by converting glutamine to glutamate. PurL transfers the ammonia molecule to FGAR to form FGAM in an ATP-dependent manner. PurS interacts with PurQ and PurL and is thought to assist in the transfer of the ammonia molecule from PurQ to PurL. The protein is Phosphoribosylformylglycinamidine synthase subunit PurQ of Corynebacterium efficiens (strain DSM 44549 / YS-314 / AJ 12310 / JCM 11189 / NBRC 100395).